Consider the following 117-residue polypeptide: uncharacterized protein (117 aa).

The N-terminal stretch at 1–24 (MMTEFGSAMTLVTGLVAYGAYVKS) is a signal peptide. Residues 42-117 (EKENFNYNNN…NNQIKRRLFD (76 aa)) are disordered. The span at 46-95 (FNYNNNNNNNNNNNNNNSNNNDNNNNNNSNSNNNNNNNNNNNNNNNNNIN) shows a compositional bias: low complexity. N-linked (GlcNAc...) asparagine glycosylation is found at N61 and N72. Residues 96–110 (DKQINGTNIFDSNNQ) show a composition bias toward polar residues.

The protein resides in the secreted. This is an uncharacterized protein from Dictyostelium discoideum (Social amoeba).